The primary structure comprises 156 residues: Ribonuclease 7 (156 aa).

The signal sequence occupies residues 1-28 (MAPARAGFCPLLLLLLLGLWVAEIPVSA). Residues 29–32 (KPKG) form an important for antibacterial activity region. Catalysis depends on His43, which acts as the Proton acceptor. Residues His43, Lys66, Asn69, and Thr70 each coordinate dUMP. Cystine bridges form between Cys51/Cys109, Cys65/Cys119, Cys83/Cys134, and Cys90/Cys97. N-linked (GlcNAc...) asparagine glycosylation is present at Asn127. Residues 139–140 (KK) are important for antibacterial activity. DUMP-binding residues include His151 and Arg154. The active-site Proton donor is the His151.

In terms of tissue distribution, expressed in collecting ducts in kidney, and in apical uroepithelium in bladder (at protein level). Expressed in various epithelial tissues including skin, respiratory tract, genito-urinary tract and, at a low level, in the gut. Expressed in liver, kidney, skeletal muscle and heart.

It is found in the secreted. Its function is as follows. Exhibits a potent RNase activity. Has broad-spectrum antimicrobial activity against many pathogenic microorganisms including uropathogenic E.coli (UPEC), and remarkably potent activity (lethal dose of 90% &lt; 30 nM) against a vancomycin resistant Enterococcus faecium. Causes loss of bacterial membrane integrity. Probably contributes to urinary tract sterility. Bactericidal activity is independent of RNase activity. This is Ribonuclease 7 (RNASE7) from Homo sapiens (Human).